Consider the following 279-residue polypeptide: MKIILADSAGFCFGVKRATNLAFDAAEQFEHICSLGPIIHSPQVVKKLEEKGIKVIRKVEDIDHGAVIIRSHGITAEELDIIHDRELKIVDATCPFVKKAQDYATMLCNEGYSVVLVGEKDHPEVQGIISYTRGGEVFVVADCKEAQRLPNRPKLGIVAQTTQSFKNLQQIADICLGKSKEVRIFNTICDATSVRQNEARKIACEADLMLVVGGFNSANTTRLAQICQEIQPRTFHVETVEQIQDGWFEGVECVGITAGASTPRWIIDQVVERVSDMSK.

Cys12 lines the [4Fe-4S] cluster pocket. Residues His40 and His72 each contribute to the (2E)-4-hydroxy-3-methylbut-2-enyl diphosphate site. Residues His40 and His72 each contribute to the dimethylallyl diphosphate site. Positions 40 and 72 each coordinate isopentenyl diphosphate. Position 94 (Cys94) interacts with [4Fe-4S] cluster. His122 serves as a coordination point for (2E)-4-hydroxy-3-methylbut-2-enyl diphosphate. His122 contacts dimethylallyl diphosphate. His122 contributes to the isopentenyl diphosphate binding site. Glu124 (proton donor) is an active-site residue. Thr161 is a (2E)-4-hydroxy-3-methylbut-2-enyl diphosphate binding site. Cys189 contributes to the [4Fe-4S] cluster binding site. 3 residues coordinate (2E)-4-hydroxy-3-methylbut-2-enyl diphosphate: Ser217, Asn219, and Ser261. Dimethylallyl diphosphate contacts are provided by Ser217, Asn219, and Ser261. Ser217, Asn219, and Ser261 together coordinate isopentenyl diphosphate.

Belongs to the IspH family. Requires [4Fe-4S] cluster as cofactor.

It catalyses the reaction isopentenyl diphosphate + 2 oxidized [2Fe-2S]-[ferredoxin] + H2O = (2E)-4-hydroxy-3-methylbut-2-enyl diphosphate + 2 reduced [2Fe-2S]-[ferredoxin] + 2 H(+). It carries out the reaction dimethylallyl diphosphate + 2 oxidized [2Fe-2S]-[ferredoxin] + H2O = (2E)-4-hydroxy-3-methylbut-2-enyl diphosphate + 2 reduced [2Fe-2S]-[ferredoxin] + 2 H(+). The protein operates within isoprenoid biosynthesis; dimethylallyl diphosphate biosynthesis; dimethylallyl diphosphate from (2E)-4-hydroxy-3-methylbutenyl diphosphate: step 1/1. Its pathway is isoprenoid biosynthesis; isopentenyl diphosphate biosynthesis via DXP pathway; isopentenyl diphosphate from 1-deoxy-D-xylulose 5-phosphate: step 6/6. Functionally, catalyzes the conversion of 1-hydroxy-2-methyl-2-(E)-butenyl 4-diphosphate (HMBPP) into a mixture of isopentenyl diphosphate (IPP) and dimethylallyl diphosphate (DMAPP). Acts in the terminal step of the DOXP/MEP pathway for isoprenoid precursor biosynthesis. This chain is 4-hydroxy-3-methylbut-2-enyl diphosphate reductase, found in Syntrophotalea carbinolica (strain DSM 2380 / NBRC 103641 / GraBd1) (Pelobacter carbinolicus).